The following is a 156-amino-acid chain: uncharacterized protein (156 aa).

The next 5 membrane-spanning stretches (helical) occupy residues 7 to 29 (AQIS…SYFL), 42 to 64 (YFAL…PYLF), 69 to 88 (AVTG…AITS), 98 to 120 (AAIW…YPAL), and 133 to 155 (ALVL…ISRI).

It localises to the cell membrane. This is an uncharacterized protein from Pasteurella multocida (strain Pm70).